Here is a 1785-residue protein sequence, read N- to C-terminus: 1,3-beta-glucan synthase component FKS3 (1785 aa).

A run of 8 helical transmembrane segments spans residues 337 to 357, 375 to 395, 415 to 435, 444 to 464, 508 to 528, 547 to 567, 572 to 592, and 712 to 732; these read FWIIHFAPFWFFTTFNSPTLY, LSVIAFGGTIACLVQILATVF, IGLLFCLAINLGPSVYVLGFF, AYIVSIVQLIIAFLTTFFFAV, LWVFVYLAKYIESYFFLTLSL, YLLGPILCKWQAKITLVLMLL, LFFLDTYLWYIICNCIFSIVL, and LATPISEPVPVDCMPTFTVLV. 2 stretches are compositionally biased toward basic and acidic residues: residues 791-801 and 815-824; these read ESSHDEDRLEI and DHTESRKLPT. The segment at 791–824 is disordered; sequence ESSHDEDRLEIPDALYDPRSSPLSDHTESRKLPT. Asparagine 844, asparagine 874, asparagine 955, asparagine 1002, and asparagine 1170 each carry an N-linked (GlcNAc...) asparagine glycan. Helical transmembrane passes span 1215–1235, 1268–1288, and 1303–1323; these read LFISFSVQLFFVLLLNLGALN, VSIFVLSIFIVFFIAFAPLLI, and FLHHLLSMAPLFEVFVCQVYS. A glycan (N-linked (GlcNAc...) asparagine) is linked at asparagine 1360. Helical transmembrane passes span 1370–1390, 1394–1414, 1475–1495, 1514–1534, and 1549–1569; these read FFMLLFAIISMWQPALLWFWI, SMCFAPFIFNPHQFAFMDFFI, FAELFLPFCVFLFNFTAFSFI, LLVTFLPIFLNSIVLFLLFWV, and AGAVIAFIAHTFSVLVYLLDF. N-linked (GlcNAc...) asparagine glycosylation is present at asparagine 1579. Transmembrane regions (helical) follow at residues 1585 to 1605, 1655 to 1675, and 1713 to 1733; these read ILLITCINMHLILFKVFTTIF, FFLGHFLLFIQTPIILLPFID, and FSLYFVMLGVLLFMLIAPFFA. Asparagine 1761 carries N-linked (GlcNAc...) asparagine glycosylation.

This sequence belongs to the glycosyltransferase 48 family. In terms of processing, N-glycosylated.

The protein localises to the mitochondrion. Its subcellular location is the membrane. The catalysed reaction is [(1-&gt;3)-beta-D-glucosyl](n) + UDP-alpha-D-glucose = [(1-&gt;3)-beta-D-glucosyl](n+1) + UDP + H(+). In terms of biological role, required for spore wall assembly. This chain is 1,3-beta-glucan synthase component FKS3 (FKS3), found in Saccharomyces cerevisiae (strain ATCC 204508 / S288c) (Baker's yeast).